The following is a 38-amino-acid chain: Toxin CSTX-16 (38 aa).

A glutamine amide mark is found at Gln-19 and Gln-38.

It belongs to the cationic peptide 04 (cupiennin) family. 10 (double chain) subfamily. In terms of tissue distribution, expressed by the venom gland.

It localises to the secreted. This chain is Toxin CSTX-16, found in Cupiennius salei (American wandering spider).